The chain runs to 465 residues: GTPase Der (465 aa).

EngA-type G domains lie at F3–F166 and I184–N358. GTP contacts are provided by residues G9 to S16, D56 to I60, N118 to D121, G190 to S197, D237 to V241, and N302 to D305. A KH-like domain is found at K359–E443.

The protein belongs to the TRAFAC class TrmE-Era-EngA-EngB-Septin-like GTPase superfamily. EngA (Der) GTPase family. As to quaternary structure, associates with the 50S ribosomal subunit.

In terms of biological role, GTPase that plays an essential role in the late steps of ribosome biogenesis. The sequence is that of GTPase Der from Francisella philomiragia subsp. philomiragia (strain ATCC 25017 / CCUG 19701 / FSC 153 / O#319-036).